A 223-amino-acid chain; its full sequence is Endonuclease V (223 aa).

Mg(2+)-binding residues include D35 and D103.

This sequence belongs to the endonuclease V family. Mg(2+) is required as a cofactor.

The protein resides in the cytoplasm. The catalysed reaction is Endonucleolytic cleavage at apurinic or apyrimidinic sites to products with a 5'-phosphate.. In terms of biological role, DNA repair enzyme involved in the repair of deaminated bases. Selectively cleaves double-stranded DNA at the second phosphodiester bond 3' to a deoxyinosine leaving behind the intact lesion on the nicked DNA. In Shigella flexneri serotype 5b (strain 8401), this protein is Endonuclease V.